The primary structure comprises 298 residues: Protease HtpX (298 aa).

2 helical membrane-spanning segments follow: residues 4-24 and 38-58; these read IGLFLLTNIAVLAVAMITMNL and LGNLFAFAAIIGFAGSFVSLA. Residue His145 participates in Zn(2+) binding. Residue Glu146 is part of the active site. A Zn(2+)-binding site is contributed by His149. Helical transmembrane passes span 160-180 and 194-214; these read LLQGVVNTFVIFFAKIVAYVV and ITFIVVDIVAQILFGILASMI. Glu223 serves as a coordination point for Zn(2+).

The protein belongs to the peptidase M48B family. Requires Zn(2+) as cofactor.

It is found in the cell inner membrane. The chain is Protease HtpX from Hydrogenovibrio crunogenus (strain DSM 25203 / XCL-2) (Thiomicrospira crunogena).